The following is a 243-amino-acid chain: Arginine transport ATP-binding protein ArtP (243 aa).

The region spanning 3–242 (IRVKNLNFFY…KTEQFKHYLS (240 aa)) is the ABC transporter domain. 35–42 (GPSGAGKS) is an ATP binding site.

It belongs to the ABC transporter superfamily. The complex is composed of two ATP-binding proteins (ArtP), two transmembrane proteins (ArtM and ArtQ) and a solute-binding protein (ArtI).

The protein localises to the cell inner membrane. The catalysed reaction is a polar amino acid(out) + ATP + H2O = a polar amino acid(in) + ADP + phosphate + H(+). It catalyses the reaction L-arginine(out) + ATP + H2O = L-arginine(in) + ADP + phosphate + H(+). In terms of biological role, part of the ABC transporter complex ArtPIQM involved in arginine transport. Probably responsible for energy coupling to the transport system. This chain is Arginine transport ATP-binding protein ArtP (artP), found in Haemophilus influenzae (strain ATCC 51907 / DSM 11121 / KW20 / Rd).